The chain runs to 277 residues: Putative phosphoenolpyruvate synthase regulatory protein (277 aa).

Residue 157-164 participates in ADP binding; it reads GVSRCGKT.

It belongs to the pyruvate, phosphate/water dikinase regulatory protein family. PSRP subfamily.

It catalyses the reaction [pyruvate, water dikinase] + ADP = [pyruvate, water dikinase]-phosphate + AMP + H(+). The catalysed reaction is [pyruvate, water dikinase]-phosphate + phosphate + H(+) = [pyruvate, water dikinase] + diphosphate. Bifunctional serine/threonine kinase and phosphorylase involved in the regulation of the phosphoenolpyruvate synthase (PEPS) by catalyzing its phosphorylation/dephosphorylation. This is Putative phosphoenolpyruvate synthase regulatory protein from Klebsiella pneumoniae (strain 342).